Consider the following 226-residue polypeptide: V-type proton ATPase subunit E 1 (226 aa).

At Ala2 the chain carries N-acetylalanine. Residue Tyr56 is modified to Phosphotyrosine.

It belongs to the V-ATPase E subunit family. In terms of assembly, V-ATPase is a heteromultimeric enzyme made up of two complexes: the ATP-hydrolytic V1 complex and the proton translocation V0 complex. The V1 complex consists of three catalytic AB heterodimers that form a heterohexamer, three peripheral stalks each consisting of EG heterodimers, one central rotor including subunits D and F, and the regulatory subunits C and H. The proton translocation complex V0 consists of the proton transport subunit a, a ring of proteolipid subunits c9c'', rotary subunit d, subunits e and f, and the accessory subunits ATP6AP1/Ac45 and ATP6AP2/PRR. Interacts with RABL2/RABL2A; binds preferentially to GTP-bound RABL2. Interacts with ALDOC. Interacts with RAB11B. As to expression, kidney; localizes to early distal nephron, encompassing thick ascending limbs and distal convoluted tubules (at protein level). Ubiquitous. High expression in the skin.

It is found in the apical cell membrane. The protein localises to the cytoplasmic vesicle. The protein resides in the secretory vesicle. It localises to the synaptic vesicle membrane. Its subcellular location is the clathrin-coated vesicle membrane. In terms of biological role, subunit of the V1 complex of vacuolar(H+)-ATPase (V-ATPase), a multisubunit enzyme composed of a peripheral complex (V1) that hydrolyzes ATP and a membrane integral complex (V0) that translocates protons. V-ATPase is responsible for acidifying and maintaining the pH of intracellular compartments and in some cell types, is targeted to the plasma membrane, where it is responsible for acidifying the extracellular environment. The chain is V-type proton ATPase subunit E 1 (ATP6V1E1) from Homo sapiens (Human).